We begin with the raw amino-acid sequence, 323 residues long: MVTVFDAVADRAQRVRHPEKAHRPDTEVLRKPDWIRVKAPTSKGYQETRSIVKSHNLVTVCEEAGCPNIGECWDKKHATFMIMGEICTRACAFCNVATGRPNALDLDEPVNVAKAVKQMGLSHVVITSVDRDDLEDGGAEHFERVIFAIREASPQTTIEILTPDFLRKPGALERVVAAKPDVFNHNLETVPSNYLTVRPGARYFHSIRLLQRVKELDPTMFTKSGIMVGLGEERNEVLQLMDDLRTADVDFLTIGQYLQPTRKHHKVEKFVTPDEFKSYETVAYTKGFLMVSSSPLTRSSHHAGDDFARLKAAREKKLLAAAE.

Cysteine 61, cysteine 66, cysteine 72, cysteine 87, cysteine 91, cysteine 94, and serine 300 together coordinate [4Fe-4S] cluster. In terms of domain architecture, Radical SAM core spans 73–289 (WDKKHATFMI…ETVAYTKGFL (217 aa)).

The protein belongs to the radical SAM superfamily. Lipoyl synthase family. The cofactor is [4Fe-4S] cluster.

The protein resides in the cytoplasm. The catalysed reaction is [[Fe-S] cluster scaffold protein carrying a second [4Fe-4S](2+) cluster] + N(6)-octanoyl-L-lysyl-[protein] + 2 oxidized [2Fe-2S]-[ferredoxin] + 2 S-adenosyl-L-methionine + 4 H(+) = [[Fe-S] cluster scaffold protein] + N(6)-[(R)-dihydrolipoyl]-L-lysyl-[protein] + 4 Fe(3+) + 2 hydrogen sulfide + 2 5'-deoxyadenosine + 2 L-methionine + 2 reduced [2Fe-2S]-[ferredoxin]. The protein operates within protein modification; protein lipoylation via endogenous pathway; protein N(6)-(lipoyl)lysine from octanoyl-[acyl-carrier-protein]: step 2/2. Functionally, catalyzes the radical-mediated insertion of two sulfur atoms into the C-6 and C-8 positions of the octanoyl moiety bound to the lipoyl domains of lipoate-dependent enzymes, thereby converting the octanoylated domains into lipoylated derivatives. This chain is Lipoyl synthase, found in Sinorhizobium medicae (strain WSM419) (Ensifer medicae).